The following is a 436-amino-acid chain: Chaperone SurA (436 aa).

Residues 1–30 (MKFFQRPERRLKQWGLALLLAASALLPARA) form the signal peptide. PpiC domains lie at 180 to 281 (ETEY…KLVD) and 291 to 389 (VTQT…QVLE).

The protein localises to the periplasm. The enzyme catalyses [protein]-peptidylproline (omega=180) = [protein]-peptidylproline (omega=0). Functionally, chaperone involved in the correct folding and assembly of outer membrane proteins. Recognizes specific patterns of aromatic residues and the orientation of their side chains, which are found more frequently in integral outer membrane proteins. May act in both early periplasmic and late outer membrane-associated steps of protein maturation. This Thiobacillus denitrificans (strain ATCC 25259 / T1) protein is Chaperone SurA.